Reading from the N-terminus, the 672-residue chain is Forkhead box protein O3 (672 aa).

Disordered regions lie at residues 1–85 and 110–152; these read MAEA…GVSS and GPAS…CSSR. Ser-30 carries the phosphoserine modification. A Phosphothreonine modification is found at Thr-32. The residue at position 46 (Lys-46) is an N6-methyllysine. The segment covering 57 to 68 has biased composition (acidic residues); the sequence is IPEEDDDEDDED. Positions 80-108 are required for mitochondrial import; the sequence is GGGVSSTLGSGLLLEDSAMLLAPGGQDLG. Residues 110–129 show a composition bias toward low complexity; that stretch reads GPASAAGALSGGTPTQLQPQ. Position 148 is an N6-methyllysine (Lys-148). Positions 156–250 form a DNA-binding region, fork-head; that stretch reads WGNLSYADLI…KSGKAPRRRA (95 aa). Phosphothreonine is present on Thr-178. 2 positions are modified to phosphoserine: Ser-208 and Ser-214. Lys-229 is modified (N6-methyllysine). The tract at residues 230 to 301 is disordered; it reads SSWWIINPDG…GSPTSRSSDE (72 aa). Residue Lys-241 is modified to N6-acetyllysine. The Nuclear localization signal motif lies at 241 to 258; it reads KSGKAPRRRAVSMDNSNK. A Phosphoserine modification is found at Ser-252. Positions 260–271 are enriched in basic residues; sequence TKSRGRAAKKKA. N6-methyllysine is present on residues Lys-261 and Lys-270. A phosphoserine mark is found at Ser-279 and Ser-283. Polar residues predominate over residues 282–297; it reads DSPSQLSKWPGSPTSR. Lys-289 is modified (N6-methyllysine). Phosphoserine is present on Ser-293. The residue at position 298 (Ser-298) is a Phosphoserine; by CaMK2A. Residues 299 to 672 form a mediates interaction with CHUK/IKKA and IKBKB/IKKB region; that stretch reads SDELDAWTDF…QASSQSWVPG (374 aa). The residue at position 310 (Ser-310) is a Phosphoserine. Ser-314 carries the phosphoserine; by SGK1 modification. Ser-398 and Ser-412 each carry phosphoserine; by AMPK. Disordered regions lie at residues 399 to 441 and 535 to 583; these read QPSP…SLNS and HQHQ…QTLS. Polar residues-rich tracts occupy residues 409-441 and 548-577; these read RGSS…SLNS and ALSN…PASQ. Lys-418 is modified (N6-methyllysine). Ser-420 carries the post-translational modification Phosphoserine. Phosphoserine; by MAPKAPK5 is present on Ser-550. Residue Ser-554 is modified to Phosphoserine; by AMPK and MAPKAPK5. A phosphoserine; by AMPK mark is found at Ser-587 and Ser-625. At Ser-643 the chain carries Phosphoserine; by IKKB.

Upon metabolic stress, forms a complex composed of FOXO3, SIRT3 and mitochondrial RNA polymerase POLRMT; the complex is recruited to mtDNA in a SIRT3-dependent manner. Also forms a complex composed of FOXO3, SIRT3, TFAM and POLRMT. Interacts with SIRT2; the interaction occurs independently of SIRT2 deacetylase activity. Interacts with YWHAB/14-3-3-beta and YWHAZ/14-3-3-zeta, which are required for cytosolic sequestration. Upon oxidative stress, interacts with STK4/MST1, which disrupts interaction with YWHAB/14-3-3-beta and leads to nuclear translocation. Interacts with PIM1. Interacts with DDIT3/CHOP. Interacts (deacetylated form) with SKP2. Interacts with CHUK and IKBKB. Interacts with CAMK2A, CAMK2B and calcineurin A. Interacts with NUPR1; this interaction represses FOXO3 transactivation. Deacetylation by SIRT1 or SIRT2 stimulates interaction of FOXO3 with SKP2 and facilitates SCF(SKP2)-mediated FOXO3 ubiquitination and proteasomal degradation. Deacetylation by SIRT2 stimulates FOXO3-mediated transcriptional activity in response to oxidative stress. Deacetylated by SIRT3. Deacetylation by SIRT3 stimulates FOXO3-mediated mtDNA transcriptional activity in response to metabolic stress. Post-translationally, in the presence of survival factors such as IGF1, phosphorylated on Thr-32 and Ser-252 by AKT1/PKB. This phosphorylated form then interacts with 14-3-3 proteins and is retained in the cytoplasm. Survival factor withdrawal induces dephosphorylation and promotes translocation to the nucleus where the dephosphorylated protein induces transcription of target genes and triggers apoptosis. Although AKT1/PKB doesn't appear to phosphorylate Ser-314 directly, it may activate other kinases that trigger phosphorylation at this residue. Phosphorylated by STK4/MST1 on Ser-208 upon oxidative stress, which leads to dissociation from YWHAB/14-3-3-beta and nuclear translocation. Phosphorylated by PIM1. Phosphorylation by AMPK leads to the activation of transcriptional activity without affecting subcellular localization. Phosphorylated by AMPK on Ser-30 in response to metabolic stress which mediates FOXO3 mitochondrial translocation. Phosphorylation by MAPKAPK5 promotes nuclear localization and DNA-binding, leading to induction of miR-34b and miR-34c expression, 2 post-transcriptional regulators of MYC that bind to the 3'UTR of MYC transcript and prevent its translation. Phosphorylated by CHUK/IKKA and IKBKB/IKKB. TNF-induced inactivation of FOXO3 requires its phosphorylation at Ser-643 by IKBKB/IKKB which promotes FOXO3 retention in the cytoplasm, polyubiquitination and ubiquitin-mediated proteasomal degradation. May be dephosphorylated by calcineurin A on Ser-298 which abolishes FOXO3 transcriptional activity. Phosphorylation at Ser-252 promotes its degradation by the proteasome. Dephosphorylation at Ser-252 by protein phosphatase 2A (PPP2CA) promotes its stabilization; interaction with PPP2CA is enhanced by AMBRA1. In terms of processing, heavily methylated by SET9 which decreases stability, while moderately increasing transcriptional activity. The main methylation site is Lys-270. Methylation doesn't affect subcellular location. Polyubiquitinated. Ubiquitinated by a SCF complex containing SKP2, leading to proteasomal degradation. Post-translationally, the N-terminus is cleaved following import into the mitochondrion. Expressed in white and brown adipose tissues (at protein level). Expressed in liver, kidney, lung and colon (at protein level). Expressed in skeletal muscles (at protein level).

The protein localises to the cytoplasm. It is found in the cytosol. The protein resides in the nucleus. Its subcellular location is the mitochondrion matrix. It localises to the mitochondrion outer membrane. Functionally, transcriptional activator that recognizes and binds to the DNA sequence 5'-[AG]TAAA[TC]A-3' and regulates different processes, such as apoptosis and autophagy. Acts as a positive regulator of autophagy in skeletal muscle: in starved cells, enters the nucleus following dephosphorylation and binds the promoters of autophagy genes, such as GABARAP1L, MAP1LC3B and ATG12, thereby activating their expression, resulting in proteolysis of skeletal muscle proteins. Triggers apoptosis in the absence of survival factors, including neuronal cell death upon oxidative stress. Participates in post-transcriptional regulation of MYC: following phosphorylation by MAPKAPK5, promotes induction of miR-34b and miR-34c expression, 2 post-transcriptional regulators of MYC that bind to the 3'UTR of MYC transcript and prevent its translation. In response to metabolic stress, translocates into the mitochondria where it promotes mtDNA transcription. Also acts as a key regulator of chondrogenic commitment of skeletal progenitor cells in response to lipid availability: when lipids levels are low, translocates to the nucleus and promotes expression of SOX9, which induces chondrogenic commitment and suppresses fatty acid oxidation. Also acts as a key regulator of regulatory T-cells (Treg) differentiation by activating expression of FOXP3. In Mus musculus (Mouse), this protein is Forkhead box protein O3.